The sequence spans 235 residues: Hydroxyacylglutathione hydrolase (235 aa).

7 residues coordinate Zn(2+): His-53, His-55, Asp-57, His-58, His-109, Asp-127, and His-165.

This sequence belongs to the metallo-beta-lactamase superfamily. Glyoxalase II family. As to quaternary structure, monomer. Zn(2+) is required as a cofactor.

It catalyses the reaction an S-(2-hydroxyacyl)glutathione + H2O = a 2-hydroxy carboxylate + glutathione + H(+). It functions in the pathway secondary metabolite metabolism; methylglyoxal degradation; (R)-lactate from methylglyoxal: step 2/2. In terms of biological role, thiolesterase that catalyzes the hydrolysis of S-D-lactoyl-glutathione to form glutathione and D-lactic acid. The protein is Hydroxyacylglutathione hydrolase of Actinobacillus pleuropneumoniae serotype 5b (strain L20).